A 976-amino-acid chain; its full sequence is Dibasic-processing endoprotease (976 aa).

The signal sequence occupies residues 1–17 (MLRKFILGLLLASQAVA). N-linked (GlcNAc...) asparagine glycosylation occurs at Asn-156. The segment covering 172–212 (AEEAQKAQDDKGDKKEDQKDDKKEGQEAQKEGDKEDNKGDD) has biased composition (basic and acidic residues). The segment at 172 to 246 (AEEAQKAQDD…VQWKPVDESM (75 aa)) is disordered. Residues 213-231 (KEDGEEDDDDDEDEDDDDA) show a composition bias toward acidic residues. One can recognise a Peptidase S8 domain in the interval 277–595 (QWYLHNVHKA…YGKLDASKIV (319 aa)). N-linked (GlcNAc...) asparagine glycosylation is found at Asn-291 and Asn-299. Residue Asp-311 is the Charge relay system of the active site. N-linked (GlcNAc...) asparagine glycosylation is present at Asn-336. Catalysis depends on charge relay system residues His-349 and Ser-528. Residues 524–544 (HGGTSAAAPLAAGVFALALSV) form a helical membrane-spanning segment. The P/Homo B domain occupies 604-737 (VNNQTSFHSE…QLNVFGEQKD (134 aa)). N-linked (GlcNAc...) asparagine glycosylation occurs at Asn-606. The interval 733–848 (GEQKDKREEN…SDSHTSWWPD (116 aa)) is disordered. Residues 734-830 (EQKDKREENK…EEKPEEKPVD (97 aa)) show a composition bias toward basic and acidic residues. Residues 855–875 (AWLYGAVLLVGGFIAVIGIYA) traverse the membrane as a helical segment. Asn-886 carries N-linked (GlcNAc...) asparagine glycosylation. A disordered region spans residues 914-976 (PEDTHRRSGD…RDNDRQNLLG (63 aa)). Basic and acidic residues-rich tracts occupy residues 915-928 (EDTH…DRLY) and 940-976 (MFRI…NLLG).

This sequence belongs to the peptidase S8 family. Furin subfamily.

The protein localises to the membrane. In Yarrowia lipolytica (strain CLIB 122 / E 150) (Yeast), this protein is Dibasic-processing endoprotease (XPR6).